Here is a 1054-residue protein sequence, read N- to C-terminus: Proteoglycan 4 (1054 aa).

The signal sequence occupies residues 1–24 (MGWKILPVCLSLLLPVVLIQQVSS). SMB domains follow at residues 26–69 (DLSS…PELS) and 66–108 (PELS…EEVH). 14 disulfides stabilise this stretch: C30–C34, C30–C46, C34–C64, C44–C46, C44–C57, C50–C56, C57–C64, C70–C74, C70–C86, C74–C104, C84–C86, C84–C97, C90–C96, and C97–C104. N109 is a glycosylation site (N-linked (GlcNAc...) asparagine). Low complexity predominate over residues 110-125 (STSPSSKTAPTPAGAS). The interval 110–764 (STSPSSKTAP…PLIPGPPVLF (655 aa)) is disordered. Residue S135 is glycosylated (O-linked (GalNAc...) serine). Over residues 162–175 (QESSSSSSSSSSTI) the composition is skewed to low complexity. Residues 188-200 (ELQKNPNVKDNKK) are compositionally biased toward basic and acidic residues. The span at 229–238 (TPPPPDPPTT) shows a compositional bias: pro residues. 2 O-linked (GalNAc...) threonine glycosylation sites follow: T237 and T250. A compositionally biased stretch (low complexity) spans 286-295 (TTATNKQSSA). An O-linked (GalNAc...) threonine glycan is attached at T301. S302 carries an O-linked (GalNAc...) serine glycan. Over residues 302–318 (SVKETRSAEKTSDKDVE) the composition is skewed to basic and acidic residues. O-linked (GalNAc...) threonine glycosylation is present at T306. A glycan (O-linked (GalNAc...) serine) is linked at S313. The stretch at 317-324 (VEPTSTTP) is one 1; approximate repeat. The tract at residues 317 to 618 (VEPTSTTPKN…TPKKPEPTTT (302 aa)) is 37 X 8 AA repeats of K-X-P-X-P-T-T-X. Positions 319 to 328 (PTSTTPKNSA) are enriched in polar residues. A 2; approximate repeat occupies 325–332 (KNSAPTTT). O-linked (GalNAc...) serine glycosylation is present at S327. Low complexity predominate over residues 329–339 (PTTTKKPVTTT). T330, T338, T354, T362, T369, T377, T378, T385, T386, T393, and T394 each carry an O-linked (GalNAc...) threonine glycan. The 3; approximate repeat unit spans residues 333–340 (KKPVTTTK). The stretch at 349–356 (QEPEPTTA) is one 4; approximate repeat. Repeat 5 spans residues 357-364 (KEPPPTTK). Over residues 364 to 399 (KKPEPTTRKEPEPTTPKEPEPTTPKEPEPTTPKEPE) the composition is skewed to basic and acidic residues. One copy of the 6; approximate repeat lies at 365–371 (KPEPTTR). Tandem repeats lie at residues 372 to 379 (KEPEPTTP), 380 to 387 (KEPEPTTP), 388 to 395 (KEPEPTTP), 396 to 403 (KEPEPTTP), and 404 to 411 (KEPPPTTK). The segment covering 400-426 (PTTPKEPPPTTKKPEPTTPKEPGPTTP) has biased composition (pro residues). Residues 412 to 418 (KPEPTTP) form a 12; approximate repeat. O-linked (GalNAc...) threonine glycosylation is found at T416, T417, T424, T432, T433, T440, T441, and T448. 3 repeat units span residues 419–426 (KEPGPTTP), 427–434 (KEPEPTTT), and 435–442 (KEPEPTTT). A compositionally biased stretch (basic and acidic residues) spans 427-550 (KEPEPTTTKE…PEPTTPKKPE (124 aa)). A 16; approximate repeat occupies 443–450 (KEPESTTR). Tandem repeats lie at residues 451-458 (KEPEPTTP), 459-466 (KEPEPTTP), 467-474 (KEPEPTTL), 475-482 (KEPEPTTP), 483-490 (KEPEPTTP), 491-498 (KEPEPTTP), 499-506 (KEPEPTTP), 507-514 (KEPEPTTP), 515-522 (KEPEPTTP), 523-530 (KEPEPTTP), 531-538 (KEPEPTTP), 539-546 (KEPEPTTP), 547-554 (KKPEPTTP), 555-562 (KEPVPTTP), 563-570 (KEPEPTTP), 571-578 (KEPEPTTP), 579-586 (KEPEPTTR), 587-594 (KEPEPTTP), 595-602 (KEPEPTTP), 603-610 (KEPEPTTP), and 611-618 (KKPEPTTT). O-linked (GalNAc...) threonine glycans are attached at residues T472, T480, T481, T488, T489, T496, T497, T504, T505, T512, T520, T521, T528, and T529. Residues 551-562 (PTTPKEPVPTTP) are compositionally biased toward pro residues. O-linked (GalNAc...) threonine glycans are attached at residues T553, T560, T561, T568, T569, T576, and T577. Basic and acidic residues predominate over residues 563 to 614 (KEPEPTTPKEPEPTTPKEPEPTTRKEPEPTTPKEPEPTTPKEPEPTTPKKPE). Residues T592, T600, and T601 are each glycosylated (O-linked (GalNAc...) threonine). A compositionally biased stretch (low complexity) spans 615 to 624 (PTTTSPKTTT). T622, T624, T628, T629, and T692 each carry an O-linked (GalNAc...) threonine glycan. A compositionally biased stretch (basic residues) spans 672-699 (KPTKKPTKAPKKPTSTKKPKTPKTRKPK). A compositionally biased stretch (low complexity) spans 700–712 (TTPSPLKTTSATP). Positions 713-735 (ELNTTPLEVMLPTTTIPKQTPNP) are enriched in polar residues. Cysteines 795 and 1053 form a disulfide. 2 Hemopexin repeats span residues 797–840 (GKPV…VWGI) and 841–888 (PSPI…FGGL). An N-linked (GlcNAc...) asparagine glycan is attached at N808. An O-linked (GalNAc...) threonine glycan is attached at T810. N-linked (GlcNAc...) asparagine glycosylation occurs at N938.

In terms of assembly, homodimer; disulfide-linked. N-glycosylated. Post-translationally, O-glycosylated; contains glycosaminoglycan chondroitin sulfate and keratan sulfate. O-glycosylated with sialylated oligosaccharides which are predominantly represented by the monosialylated core type I structure, NeuNAcalpha2-3Galbeta1-3GalNAc, with smaller amounts of disialylated O-glycans. In terms of processing, the disulfide bond between Cys-795 and Cys-1053 is essential for protein cleavage. Proteolytically cleaved by cathepsin CTSG. In terms of tissue distribution, highly expressed in cartilage, bone and liver and weakly expressed in heart, brain and muscle. Expressed in the surface chondrocytes and in synovial intimal cells. Isoform B is expressed in bone, small intestine, muscle, testis, heart, liver and lung. Isoform C and isoform D are widely expressed.

It is found in the secreted. In terms of biological role, plays a role in boundary lubrication within articulating joints. Prevents protein deposition onto cartilage from synovial fluid by controlling adhesion-dependent synovial growth and inhibiting the adhesion of synovial cells to the cartilage surface. This is Proteoglycan 4 (Prg4) from Mus musculus (Mouse).